The primary structure comprises 167 residues: uncharacterized protein (167 aa).

Positions 140–167 (SSEEKKKKKKKKKEKSLHTEREKKKKKF) are disordered. Residues 145-154 (KKKKKKKKEK) are compositionally biased toward basic residues.

This is an uncharacterized protein from Saccharomyces cerevisiae (strain ATCC 204508 / S288c) (Baker's yeast).